The following is a 245-amino-acid chain: tRNA (guanine-N(1)-)-methyltransferase (245 aa).

S-adenosyl-L-methionine is bound by residues Gly-111 and 131–136; that span reads IGDYVL.

The protein belongs to the RNA methyltransferase TrmD family. As to quaternary structure, homodimer.

The protein localises to the cytoplasm. It carries out the reaction guanosine(37) in tRNA + S-adenosyl-L-methionine = N(1)-methylguanosine(37) in tRNA + S-adenosyl-L-homocysteine + H(+). Functionally, specifically methylates guanosine-37 in various tRNAs. This Staphylococcus haemolyticus (strain JCSC1435) protein is tRNA (guanine-N(1)-)-methyltransferase.